A 495-amino-acid chain; its full sequence is UDP-N-acetylmuramoyl-L-alanyl-D-glutamate--2,6-diaminopimelate ligase (495 aa).

S29 contacts UDP-N-acetyl-alpha-D-muramoyl-L-alanyl-D-glutamate. ATP is bound at residue 111 to 117 (GTNGKTS). UDP-N-acetyl-alpha-D-muramoyl-L-alanyl-D-glutamate is bound by residues 153–154 (TT), S180, Q186, and R188. K220 bears the N6-carboxylysine mark. Meso-2,6-diaminopimelate is bound by residues R384, 408–411 (DNPR), G459, and E463. The short motif at 408-411 (DNPR) is the Meso-diaminopimelate recognition motif element.

The protein belongs to the MurCDEF family. MurE subfamily. It depends on Mg(2+) as a cofactor. Carboxylation is probably crucial for Mg(2+) binding and, consequently, for the gamma-phosphate positioning of ATP.

Its subcellular location is the cytoplasm. It catalyses the reaction UDP-N-acetyl-alpha-D-muramoyl-L-alanyl-D-glutamate + meso-2,6-diaminopimelate + ATP = UDP-N-acetyl-alpha-D-muramoyl-L-alanyl-gamma-D-glutamyl-meso-2,6-diaminopimelate + ADP + phosphate + H(+). The protein operates within cell wall biogenesis; peptidoglycan biosynthesis. Catalyzes the addition of meso-diaminopimelic acid to the nucleotide precursor UDP-N-acetylmuramoyl-L-alanyl-D-glutamate (UMAG) in the biosynthesis of bacterial cell-wall peptidoglycan. This Xanthomonas oryzae pv. oryzae (strain MAFF 311018) protein is UDP-N-acetylmuramoyl-L-alanyl-D-glutamate--2,6-diaminopimelate ligase.